A 246-amino-acid chain; its full sequence is 2-C-methyl-D-erythritol 4-phosphate cytidylyltransferase (246 aa).

It belongs to the IspD/TarI cytidylyltransferase family. IspD subfamily.

It catalyses the reaction 2-C-methyl-D-erythritol 4-phosphate + CTP + H(+) = 4-CDP-2-C-methyl-D-erythritol + diphosphate. It functions in the pathway isoprenoid biosynthesis; isopentenyl diphosphate biosynthesis via DXP pathway; isopentenyl diphosphate from 1-deoxy-D-xylulose 5-phosphate: step 2/6. Catalyzes the formation of 4-diphosphocytidyl-2-C-methyl-D-erythritol from CTP and 2-C-methyl-D-erythritol 4-phosphate (MEP). This is 2-C-methyl-D-erythritol 4-phosphate cytidylyltransferase from Chlorobaculum parvum (strain DSM 263 / NCIMB 8327) (Chlorobium vibrioforme subsp. thiosulfatophilum).